Here is a 344-residue protein sequence, read N- to C-terminus: Dihydroorotase (344 aa).

His13 and His15 together coordinate Zn(2+). Substrate contacts are provided by residues 15–17 and Asn41; that span reads HLR. Zn(2+) contacts are provided by Lys99, His136, and His174. N6-carboxylysine is present on Lys99. Position 136 (His136) interacts with substrate. Substrate is bound at residue Leu219. Asp247 is a binding site for Zn(2+). Residue Asp247 is part of the active site. Substrate-binding residues include His251 and Ala263.

Belongs to the metallo-dependent hydrolases superfamily. DHOase family. Class II DHOase subfamily. In terms of assembly, homodimer. The cofactor is Zn(2+).

The enzyme catalyses (S)-dihydroorotate + H2O = N-carbamoyl-L-aspartate + H(+). The protein operates within pyrimidine metabolism; UMP biosynthesis via de novo pathway; (S)-dihydroorotate from bicarbonate: step 3/3. Functionally, catalyzes the reversible cyclization of carbamoyl aspartate to dihydroorotate. The sequence is that of Dihydroorotase from Idiomarina loihiensis (strain ATCC BAA-735 / DSM 15497 / L2-TR).